The chain runs to 196 residues: Large ribosomal subunit protein bL9 (196 aa).

It belongs to the bacterial ribosomal protein bL9 family.

Functionally, binds to the 23S rRNA. This chain is Large ribosomal subunit protein bL9, found in Gluconobacter oxydans (strain 621H) (Gluconobacter suboxydans).